Consider the following 314-residue polypeptide: Probable dimethyladenosine transferase (314 aa).

S-adenosyl-L-methionine contacts are provided by His36, Leu38, Gly63, Glu84, Asp112, and Asn127.

This sequence belongs to the class I-like SAM-binding methyltransferase superfamily. rRNA adenine N(6)-methyltransferase family. As to quaternary structure, part of the small subunit (SSU) processome, composed of more than 70 proteins and the RNA chaperone small nucleolar RNA (snoRNA) U3.

The protein localises to the nucleus. It localises to the nucleoplasm. It is found in the nucleolus. It carries out the reaction adenosine(1779)/adenosine(1780) in 18S rRNA + 4 S-adenosyl-L-methionine = N(6)-dimethyladenosine(1779)/N(6)-dimethyladenosine(1780) in 18S rRNA + 4 S-adenosyl-L-homocysteine + 4 H(+). Functionally, specifically dimethylates two adjacent adenosines in the loop of a conserved hairpin near the 3'-end of 18S rRNA in the 40S particle. Involved in the pre-rRNA processing steps leading to small-subunit rRNA production independently of its RNA-modifying catalytic activity. Part of the small subunit (SSU) processome, first precursor of the small eukaryotic ribosomal subunit. During the assembly of the SSU processome in the nucleolus, many ribosome biogenesis factors, an RNA chaperone and ribosomal proteins associate with the nascent pre-rRNA and work in concert to generate RNA folding, modifications, rearrangements and cleavage as well as targeted degradation of pre-ribosomal RNA by the RNA exosome. The polypeptide is Probable dimethyladenosine transferase (dimt1) (Dictyostelium discoideum (Social amoeba)).